Here is a 131-residue protein sequence, read N- to C-terminus: Small ribosomal subunit protein uS11 (131 aa).

This sequence belongs to the universal ribosomal protein uS11 family. In terms of assembly, part of the 30S ribosomal subunit. Interacts with proteins S7 and S18. Binds to IF-3.

Located on the platform of the 30S subunit, it bridges several disparate RNA helices of the 16S rRNA. Forms part of the Shine-Dalgarno cleft in the 70S ribosome. The polypeptide is Small ribosomal subunit protein uS11 (Deinococcus radiodurans (strain ATCC 13939 / DSM 20539 / JCM 16871 / CCUG 27074 / LMG 4051 / NBRC 15346 / NCIMB 9279 / VKM B-1422 / R1)).